Reading from the N-terminus, the 49-residue chain is Multidrug efflux pump accessory protein AcrZ (49 aa).

At 1 to 7 (MLELLKS) the chain is on the periplasmic side. A helical transmembrane segment spans residues 8 to 28 (LVFAVIMVPVVMAIILGLIYG). At 29–49 (LGEVFNIFSGVGKKDQPGQNH) the chain is on the cytoplasmic side.

The protein belongs to the AcrZ family. As to quaternary structure, part of the AcrA-AcrB-AcrZ-TolC efflux pump, interacts directly with AcrB.

The protein localises to the cell inner membrane. Functionally, acrA-AcrB-AcrZ-TolC is a drug efflux protein complex with a broad substrate specificity. This protein binds to AcrB and is required for efflux of some but not all substrates, suggesting it may influence the specificity of drug export. In Escherichia coli O157:H7, this protein is Multidrug efflux pump accessory protein AcrZ.